Here is a 29-residue protein sequence, read N- to C-terminus: Cyclotide mden-C (29 aa).

Positions glycine 1–asparagine 29 form a cross-link, cyclopeptide (Gly-Asn). Cystine bridges form between cysteine 5/cysteine 19, cysteine 9/cysteine 21, and cysteine 14/cysteine 26.

This sequence belongs to the cyclotide family. In terms of processing, this is a cyclic peptide.

Its function is as follows. Probably participates in a plant defense mechanism. This Melicytus dentatus (Tree violet) protein is Cyclotide mden-C.